We begin with the raw amino-acid sequence, 184 residues long: Probable RNA 2'-phosphotransferase (184 aa).

The protein belongs to the KptA/TPT1 family.

In terms of biological role, removes the 2'-phosphate from RNA via an intermediate in which the phosphate is ADP-ribosylated by NAD followed by a presumed transesterification to release the RNA and generate ADP-ribose 1''-2''-cyclic phosphate (APPR&gt;P). May function as an ADP-ribosylase. In Burkholderia pseudomallei (strain K96243), this protein is Probable RNA 2'-phosphotransferase.